A 241-amino-acid chain; its full sequence is Ribosomal RNA small subunit methyltransferase G (241 aa).

S-adenosyl-L-methionine-binding positions include Gly-79, Phe-84, 130–131 (AE), and Arg-150.

It belongs to the methyltransferase superfamily. RNA methyltransferase RsmG family.

The protein resides in the cytoplasm. Its function is as follows. Specifically methylates the N7 position of a guanine in 16S rRNA. This is Ribosomal RNA small subunit methyltransferase G from Ligilactobacillus salivarius (strain UCC118) (Lactobacillus salivarius).